The sequence spans 222 residues: UPF0502 protein Shewmr4_1554 (222 aa).

Residues serine 175–arginine 193 show a composition bias toward polar residues. Residues serine 175 to glutamine 194 are disordered.

This sequence belongs to the UPF0502 family.

This is UPF0502 protein Shewmr4_1554 from Shewanella sp. (strain MR-4).